Consider the following 416-residue polypeptide: Gamma-glutamyl phosphate reductase (416 aa).

Belongs to the gamma-glutamyl phosphate reductase family.

The protein localises to the cytoplasm. The enzyme catalyses L-glutamate 5-semialdehyde + phosphate + NADP(+) = L-glutamyl 5-phosphate + NADPH + H(+). It functions in the pathway amino-acid biosynthesis; L-proline biosynthesis; L-glutamate 5-semialdehyde from L-glutamate: step 2/2. In terms of biological role, catalyzes the NADPH-dependent reduction of L-glutamate 5-phosphate into L-glutamate 5-semialdehyde and phosphate. The product spontaneously undergoes cyclization to form 1-pyrroline-5-carboxylate. The chain is Gamma-glutamyl phosphate reductase from Streptococcus thermophilus.